The following is a 731-amino-acid chain: DNA gyrase subunit B, chloroplastic/mitochondrial (731 aa).

The Toprim domain maps to Ala-512–Gly-619. Positions 518, 592, and 594 each coordinate Mg(2+).

The protein belongs to the type II topoisomerase GyrB family. As to quaternary structure, made up of two chains. The A chain is responsible for DNA breakage and rejoining; the B chain catalyzes ATP hydrolysis. The cofactor is Mg(2+). Mn(2+) serves as cofactor. It depends on Ca(2+) as a cofactor. In terms of tissue distribution, ubiquitous.

It localises to the plastid. Its subcellular location is the chloroplast. The protein resides in the mitochondrion. The enzyme catalyses ATP-dependent breakage, passage and rejoining of double-stranded DNA.. Its function is as follows. Seems to play a critical role in chloroplast nucleoid partitioning by regulating DNA topology. A type II topoisomerase that negatively supercoils closed circular double-stranded DNA in an ATP-dependent manner. This Nicotiana benthamiana protein is DNA gyrase subunit B, chloroplastic/mitochondrial (GYRB).